Here is a 444-residue protein sequence, read N- to C-terminus: Zinc finger protein ZIC 1 (444 aa).

A C2H2-type 1 zinc finger spans residues 222–257 (LICKWIEPEQLANPKKSCNKTFSTMHELVTHVTVEH). The C2H2-type 2; degenerate zinc-finger motif lies at 271–293 (EECPREGKPFKAKYKLVNHIRVH). C2H2-type zinc fingers lie at residues 299–323 (FPCPFPGCGKVFARSENLKIHKRTH), 329–353 (FKCEFEGCDRRFANSSDRKKHMHVH), and 359–381 (YLCKMCDKSYTHPSSLRKHMKVH). Residues 372–432 (SSLRKHMKVH…SSAGHHTASH (61 aa)) are disordered. The segment covering 383-432 (SSSQGSQPSPAASSGYESSTPPTIVSPSTENQTASSLSPSSSAGHHTASH) has biased composition (low complexity).

This sequence belongs to the GLI C2H2-type zinc-finger protein family.

The protein localises to the nucleus. It localises to the cytoplasm. In terms of biological role, acts as a transcriptional activator. Involved in neurogenesis. Plays important roles in the early stage of organogenesis of the CNS, as well as during dorsal spinal cord development and maturation of the cerebellum. Binds to the minimal GLI-consensus sequence 5'-TGGGTGGTC-3'. This is Zinc finger protein ZIC 1 (ZIC1) from Gallus gallus (Chicken).